We begin with the raw amino-acid sequence, 400 residues long: Homoserine O-acetyltransferase (400 aa).

Over residues 1–11 (MVKVQSIQSQA) the composition is skewed to polar residues. The disordered stretch occupies residues 1–24 (MVKVQSIQSQAVHAEERAHEADHP). Over residues 13-23 (HAEERAHEADH) the composition is skewed to basic and acidic residues. Residues 64 to 373 (NAILVCHALT…TDRGHDAFLL (310 aa)) form the AB hydrolase-1 domain. Catalysis depends on Ser-169, which acts as the Nucleophile. Arg-239 contacts substrate. Residues Asp-335 and His-368 contribute to the active site. Asp-369 lines the substrate pocket.

It belongs to the AB hydrolase superfamily. MetX family. As to quaternary structure, homodimer.

The protein localises to the cytoplasm. The enzyme catalyses L-homoserine + acetyl-CoA = O-acetyl-L-homoserine + CoA. The protein operates within amino-acid biosynthesis; L-methionine biosynthesis via de novo pathway; O-acetyl-L-homoserine from L-homoserine: step 1/1. In terms of biological role, transfers an acetyl group from acetyl-CoA to L-homoserine, forming acetyl-L-homoserine. This is Homoserine O-acetyltransferase from Rhodopseudomonas palustris (strain BisB18).